We begin with the raw amino-acid sequence, 104 residues long: NADH-quinone oxidoreductase subunit K (104 aa).

Transmembrane regions (helical) follow at residues 4-24, 31-51, and 67-87; these read VPAS…LFGA, VIVL…LVAF, and LFTM…LIAL.

The protein belongs to the complex I subunit 4L family. In terms of assembly, NDH-1 is composed of 14 different subunits. Subunits NuoA, H, J, K, L, M, N constitute the membrane sector of the complex.

The protein localises to the cell membrane. It carries out the reaction a quinone + NADH + 5 H(+)(in) = a quinol + NAD(+) + 4 H(+)(out). Functionally, NDH-1 shuttles electrons from NADH, via FMN and iron-sulfur (Fe-S) centers, to quinones in the respiratory chain. The immediate electron acceptor for the enzyme in this species is believed to be a menaquinone. Couples the redox reaction to proton translocation (for every two electrons transferred, four hydrogen ions are translocated across the cytoplasmic membrane), and thus conserves the redox energy in a proton gradient. This Bacillus cereus (strain ATCC 14579 / DSM 31 / CCUG 7414 / JCM 2152 / NBRC 15305 / NCIMB 9373 / NCTC 2599 / NRRL B-3711) protein is NADH-quinone oxidoreductase subunit K.